The following is a 557-amino-acid chain: Cytochrome P450 734A2 (557 aa).

Residues 13-35 form a helical membrane-spanning segment; the sequence is WATWRVAAVAAAAAVWVTMHVAA. Residue Cys495 coordinates heme.

It belongs to the cytochrome P450 family. Heme serves as cofactor. As to expression, expressed in roots, shoot apex, leaf sheaths and leaf blades.

The protein localises to the membrane. In terms of biological role, cytochrome P450 involved in brassinosteroids (BRs) inactivation and regulation of BRs homeostasis. Is a multifunctional and multisubstrate enzyme that controls the endogenous bioactive BR content both by direct inactivation of castasterone (CS) and by decreasing the levels of BR precursors. Catalyzes the oxidation of carbon 22 hydroxylated BR intermediates to produce C26 oxidized metabolites. The polypeptide is Cytochrome P450 734A2 (CYP734A2) (Oryza sativa subsp. japonica (Rice)).